A 237-amino-acid chain; its full sequence is 2-C-methyl-D-erythritol 4-phosphate cytidylyltransferase (237 aa).

Belongs to the IspD/TarI cytidylyltransferase family. IspD subfamily.

The catalysed reaction is 2-C-methyl-D-erythritol 4-phosphate + CTP + H(+) = 4-CDP-2-C-methyl-D-erythritol + diphosphate. It participates in isoprenoid biosynthesis; isopentenyl diphosphate biosynthesis via DXP pathway; isopentenyl diphosphate from 1-deoxy-D-xylulose 5-phosphate: step 2/6. In terms of biological role, catalyzes the formation of 4-diphosphocytidyl-2-C-methyl-D-erythritol from CTP and 2-C-methyl-D-erythritol 4-phosphate (MEP). In Paraburkholderia xenovorans (strain LB400), this protein is 2-C-methyl-D-erythritol 4-phosphate cytidylyltransferase.